The following is a 200-amino-acid chain: Probable gluconokinase (200 aa).

Residue 34–41 (GVSGSGKT) coordinates ATP.

Belongs to the gluconokinase GntK/GntV family.

The catalysed reaction is D-gluconate + ATP = 6-phospho-D-gluconate + ADP + H(+). The protein operates within carbohydrate acid metabolism; D-gluconate degradation. The chain is Probable gluconokinase from Dictyostelium discoideum (Social amoeba).